An 838-amino-acid polypeptide reads, in one-letter code: Urease (838 aa).

The 439-residue stretch at 400–838 (GAIDCHVHFI…VPLSRNYFLF (439 aa)) folds into the Urease domain. Positions 405, 407, and 488 each coordinate Ni(2+). The residue at position 488 (K488) is an N6-carboxylysine. H490 lines the substrate pocket. Residues H517 and H543 each contribute to the Ni(2+) site. H591 functions as the Proton donor in the catalytic mechanism. Ni(2+) is bound at residue D631.

The protein in the C-terminal section; belongs to the metallo-dependent hydrolases superfamily. Urease alpha subunit family. In terms of assembly, homohexamer. Other oligomeric forms may exist depending on pH and presence of salts. Requires Ni(2+) as cofactor. Post-translationally, carboxylation allows a single lysine to coordinate two nickel ions.

It carries out the reaction urea + 2 H2O + H(+) = hydrogencarbonate + 2 NH4(+). Its pathway is nitrogen metabolism; urea degradation; CO(2) and NH(3) from urea (urease route): step 1/1. Its activity is regulated as follows. Requires the three urease accessory proteins URED, UREF AND UREG for its activation. Functionally, urea hydrolase involved in nitrogen recycling from ureide, purine, and arginine catabolism. This is Urease from Arabidopsis thaliana (Mouse-ear cress).